A 327-amino-acid chain; its full sequence is Putative pumilio homolog 19 (327 aa).

The 324-residue stretch at 1 to 324 (MAVSDNTFSM…NIANILDTFR (324 aa)) folds into the PUM-HD domain. Pumilio repeat units follow at residues 79 to 114 (SDSD…FCAA), 115 to 149 (ILRR…ALYE), 150 to 185 (RILY…DQLL), 186 to 222 (ELVV…NIAV), 223 to 260 (NLYG…ELLG), and 261 to 295 (CDGD…DLFW).

The protein localises to the cytoplasm. In terms of biological role, sequence-specific RNA-binding protein that regulates translation and mRNA stability by binding the 3'-UTR of target mRNAs. The chain is Putative pumilio homolog 19 (APUM19) from Arabidopsis thaliana (Mouse-ear cress).